The sequence spans 341 residues: Aspartate--ammonia ligase (341 aa).

It belongs to the class-II aminoacyl-tRNA synthetase family. AsnA subfamily.

Its subcellular location is the cytoplasm. The enzyme catalyses L-aspartate + NH4(+) + ATP = L-asparagine + AMP + diphosphate + H(+). The protein operates within amino-acid biosynthesis; L-asparagine biosynthesis; L-asparagine from L-aspartate (ammonia route): step 1/1. This chain is Aspartate--ammonia ligase, found in Clostridium tetani (strain Massachusetts / E88).